A 448-amino-acid chain; its full sequence is Adenylyltransferase and sulfurtransferase UBA4 (448 aa).

ATP is bound by residues Gly88, Asp109, 116–120, Lys133, and 177–178; these read SNLHR and DT. Cys219 and Cys222 together coordinate Zn(2+). Residue Cys236 is the Glycyl thioester intermediate; for adenylyltransferase activity of the active site. Residues Cys297 and Cys300 each contribute to the Zn(2+) site. The 98-residue stretch at 349–446 folds into the Rhodanese domain; it reads QGENSILIDV…WSKEIDSKIP (98 aa). The Cysteine persulfide intermediate; for sulfurtransferase activity role is filled by Cys405.

It in the N-terminal section; belongs to the HesA/MoeB/ThiF family. UBA4 subfamily. Requires Zn(2+) as cofactor.

The protein localises to the cytoplasm. The protein resides in the cytosol. The protein operates within tRNA modification; 5-methoxycarbonylmethyl-2-thiouridine-tRNA biosynthesis. Plays a central role in 2-thiolation of mcm(5)S(2)U at tRNA wobble positions of cytosolic tRNA(Lys), tRNA(Glu) and tRNA(Gln). Acts by mediating the C-terminal thiocarboxylation of sulfur carrier URM1. Its N-terminus first activates URM1 as acyl-adenylate (-COAMP), then the persulfide sulfur on the catalytic cysteine is transferred to URM1 to form thiocarboxylation (-COSH) of its C-terminus. The reaction probably involves hydrogen sulfide that is generated from the persulfide intermediate and that acts as a nucleophile towards URM1. Subsequently, a transient disulfide bond is formed. Does not use thiosulfate as sulfur donor; NFS1 probably acting as a sulfur donor for thiocarboxylation reactions. Prior mcm(5) tRNA modification by the elongator complex is required for 2-thiolation. May also be involved in protein urmylation. In Debaryomyces hansenii (strain ATCC 36239 / CBS 767 / BCRC 21394 / JCM 1990 / NBRC 0083 / IGC 2968) (Yeast), this protein is Adenylyltransferase and sulfurtransferase UBA4.